The primary structure comprises 355 residues: MSGQPKRLMVMAGGTGGHVFPGLAVAHHLMDQGWQVRWLGTADRMEADLVPKHGIEIDFIRISGLRGKGVKALLAAPLRIFNAWRQARAIMKQFKPDVVLGMGGYVSGPGGLAAWSLGIPVVLHEQNGIAGLTNKWLAKIATTVMQAFPGAFPKADVVGNPVRTDVLALPLPQERLAGREGPIRVLVVGGSQGARVLNQTLPQVAAKLGDTVTIWHQSGKGAQQTVEQAYAGAGQPQHKVTEFIDDMAAAYAWADVVVCRSGALTVSEIAAAGLPALFVPFQHKDRQQYWNALPLEKAGAAKIFEQPQFTVDAVASTLSGWSRETLLTMAERARAASIPDATERVANEVSRAARA.

UDP-N-acetyl-alpha-D-glucosamine is bound by residues Thr-15 to Gly-17, Asn-127, Arg-163, Ser-191, Ile-244, Ala-263 to Glu-268, and Gln-288.

It belongs to the glycosyltransferase 28 family. MurG subfamily.

It is found in the cell inner membrane. It carries out the reaction di-trans,octa-cis-undecaprenyl diphospho-N-acetyl-alpha-D-muramoyl-L-alanyl-D-glutamyl-meso-2,6-diaminopimeloyl-D-alanyl-D-alanine + UDP-N-acetyl-alpha-D-glucosamine = di-trans,octa-cis-undecaprenyl diphospho-[N-acetyl-alpha-D-glucosaminyl-(1-&gt;4)]-N-acetyl-alpha-D-muramoyl-L-alanyl-D-glutamyl-meso-2,6-diaminopimeloyl-D-alanyl-D-alanine + UDP + H(+). The protein operates within cell wall biogenesis; peptidoglycan biosynthesis. Functionally, cell wall formation. Catalyzes the transfer of a GlcNAc subunit on undecaprenyl-pyrophosphoryl-MurNAc-pentapeptide (lipid intermediate I) to form undecaprenyl-pyrophosphoryl-MurNAc-(pentapeptide)GlcNAc (lipid intermediate II). This chain is UDP-N-acetylglucosamine--N-acetylmuramyl-(pentapeptide) pyrophosphoryl-undecaprenol N-acetylglucosamine transferase, found in Citrobacter koseri (strain ATCC BAA-895 / CDC 4225-83 / SGSC4696).